The sequence spans 381 residues: Subtilisin J (381 aa).

Positions 1 to 29 are cleaved as a signal peptide; that stretch reads MRSKKLWISLLFALTLIFTMAFSNMSVQA. Positions 30–106 are excised as a propeptide; the sequence is AGKSSTEKKY…VEEDHIAHEY (77 aa). An Inhibitor I9 domain is found at 38–103; it reads KYIVGFKQTM…VAYVEEDHIA (66 aa). Residue Gln-108 coordinates Ca(2+). The region spanning 111–380 is the Peptidase S8 domain; it reads PYGISQIKAP…KGLINVQAAA (270 aa). The active-site Charge relay system is Asp-138. Residue Asp-147 participates in Ca(2+) binding. His-170 serves as the catalytic Charge relay system. Residues Leu-181, Asn-183, Ile-185, Val-187, Ala-275, Tyr-277, and Thr-280 each contribute to the Ca(2+) site. The Charge relay system role is filled by Ser-327.

This sequence belongs to the peptidase S8 family. It depends on Ca(2+) as a cofactor.

The protein localises to the secreted. It catalyses the reaction Hydrolysis of proteins with broad specificity for peptide bonds, and a preference for a large uncharged residue in P1. Hydrolyzes peptide amides.. Functionally, subtilisin is an extracellular alkaline serine protease, it catalyzes the hydrolysis of proteins and peptide amides. The chain is Subtilisin J (aprJ) from Geobacillus stearothermophilus (Bacillus stearothermophilus).